Consider the following 380-residue polypeptide: Kappa-type opioid receptor (380 aa).

Over 1-57 (MESPIQIFRGEPGPTCAPSACLLPNSSSWFPNWAESDSNGSVGSEDQQLEPAHISPA) the chain is Extracellular. 2 N-linked (GlcNAc...) asparagine glycosylation sites follow: asparagine 25 and asparagine 39. The chain crosses the membrane as a helical span at residues 58–85 (IPVIITAVYSVVFVVGLVGNSLVMFVII). The Cytoplasmic segment spans residues 86–95 (RYTKMKTATN). A helical transmembrane segment spans residues 96–119 (IYIFNLALADALVTTTMPFQSAVY). At 120–132 (LMNSWPFGDVLCK) the chain is on the extracellular side. Cysteine 131 and cysteine 210 are oxidised to a cystine. The helical transmembrane segment at 133–154 (IVISIDYYNMFTSIFTLTMMSV) threads the bilayer. Residues 155 to 173 (DRYIAVCHPVKALDFRTPL) lie on the Cytoplasmic side of the membrane. Residues 174–196 (KAKIINICIWLLASSVGISAIVL) form a helical membrane-spanning segment. At 197–222 (GGTKVREDVDVIECSLQFPDDEYSWW) the chain is on the extracellular side. A helical transmembrane segment spans residues 223–247 (DLFMKICVFVFAFVIPVLIIIVCYT). Over 248–274 (LMILRLKSVRLLSGSREKDRNLRRITK) the chain is Cytoplasmic. The chain crosses the membrane as a helical span at residues 275-296 (LVLVVVAVFIICWTPIHIFILV). At 297-311 (EALGSTSHSTAVLSS) the chain is on the extracellular side. The helical transmembrane segment at 312–333 (YYFCIALGYTNSSLNPVLYAFL) threads the bilayer. Topologically, residues 334–380 (DENFKRCFRDFCFPIKMRMERQSTNRVRNTVQDPASMRDVGGMNKPV) are cytoplasmic. The S-palmitoyl cysteine moiety is linked to residue cysteine 345.

Belongs to the G-protein coupled receptor 1 family. Interacts with NHERF1. Interacts with GABARAPL1.

The protein resides in the cell membrane. Its function is as follows. G-protein coupled opioid receptor that functions as a receptor for endogenous alpha-neoendorphins and dynorphins, but has low affinity for beta-endorphins. Also functions as a receptor for various synthetic opioids and for the psychoactive diterpene salvinorin A. Ligand binding causes a conformation change that triggers signaling via guanine nucleotide-binding proteins (G proteins) and modulates the activity of down-stream effectors, such as adenylate cyclase. Signaling leads to the inhibition of adenylate cyclase activity. Inhibits neurotransmitter release by reducing calcium ion currents and increasing potassium ion conductance. Plays a role in the perception of pain. Plays a role in mediating reduced physical activity upon treatment with synthetic opioids. Plays a role in the regulation of salivation in response to synthetic opioids. May play a role in arousal and regulation of autonomic and neuroendocrine functions. The protein is Kappa-type opioid receptor (Oprk1) of Rattus norvegicus (Rat).